Here is a 333-residue protein sequence, read N- to C-terminus: Nucleoid-associated protein YE1421 (333 aa).

The protein belongs to the YejK family.

It is found in the cytoplasm. It localises to the nucleoid. The sequence is that of Nucleoid-associated protein YE1421 from Yersinia enterocolitica serotype O:8 / biotype 1B (strain NCTC 13174 / 8081).